Consider the following 314-residue polypeptide: Secreted frizzled-related protein 1 (314 aa).

The signal sequence occupies residues 1 to 31 (MGVGRSARGRGGAASGVLLALAAALLAAGSA). Positions 53–169 (TKPPQCVDIP…FPEGDVCIAM (117 aa)) constitute an FZ domain. 5 disulfides stabilise this stretch: Cys-58–Cys-121, Cys-68–Cys-114, Cys-105–Cys-140, Cys-129–Cys-166, and Cys-133–Cys-157. N-linked (GlcNAc...) asparagine glycosylation occurs at Asn-173. Cystine bridges form between Cys-186–Cys-256, Cys-189–Cys-258, and Cys-203–Cys-306. The NTR domain maps to 186-306 (CPPCDNELKS…FMKRMKNHEC (121 aa)).

The protein belongs to the secreted frizzled-related protein (sFRP) family. Interacts with WNT8, WNT1, WNT2, WNT4 and FRZD6. Interacts with MYOC. Highly expressed in kidney and embryonic heart. Also highly expressed in the eye, where it is principally localized to the ciliary body and the lens epithelium. Weaker expression in heart, lung and brain. In the brain, is expressed exclusively in the choroid plexus.

Its subcellular location is the secreted. In terms of biological role, soluble frizzled-related proteins (sFRPS) function as modulators of Wnt signaling through direct interaction with Wnts. They have a role in regulating cell growth and differentiation in specific cell types. SFRP1 decreases intracellular beta-catenin levels. Has antiproliferative effects on vascular cells, in vitro and in vivo, and can induce, in vivo, an angiogenic response. In vascular cell cycle, delays the G1 phase and entry into the S phase. In kidney development, inhibits tubule formation and bud growth in metanephroi. Inhibits WNT1/WNT4-mediated TCF-dependent transcription. This Mus musculus (Mouse) protein is Secreted frizzled-related protein 1.